A 624-amino-acid chain; its full sequence is MKGQETRGFQSEVKQLLHLMIHSLYSNKEIFLRELISNASDAADKLRFRSLSNPDLYEGDGELRVRVSFDKDKRTLTISDNGVGMTRDEVIDHLGTIAKSGTKSFLESLGSDQAKDSQLIGQFGVGFYSAFIVADKVTVRTRAAGEKPENGVFWESAGEGEYTVADITKEDRGTEITLHLREGEDEFLDDWRVRSIISKYSDHIALPVEIEKCEEKDGETVISWEKINKAQALWTRNKSEITDEEYKEFYKHIAHDFNDPLTWSHNRVEGKQEYTSLLYIPSQAPWDMWNRDHKHGLKLYVQRVFIMDDAEQFMPNYLRFVRGLIDSSDLSLNVSREILQDSTVTRNLRNALTKRVLQMLEKLAKDDAEKYQTFWQQFGLVLKEGPAEDFANQEAIAKLLRFASTHTDSSAQTVSLEDYVSRMKEGQEKIYYITADSYAAAKSSPHLELLRKKGIEVLLLSDRIDEWMMNYLTEFDGKPFQSVSKVDESLEKLADEVDESAKEAEKALTPFIDRVKALLGERVKDVRLTHRLTDTPAIVSTDADEMSTQMAKLFAAAGQKVPEVKYIFELNPDHVLVKRAADTEDEAKFSEWVELLLDQALLAERGTLEDPNLFIRRMNQLLVS.

An a; substrate-binding region spans residues 1–336; the sequence is MKGQETRGFQ…SSDLSLNVSR (336 aa). Residues 337-552 are b; it reads EILQDSTVTR…ADEMSTQMAK (216 aa). A c region spans residues 553-624; sequence LFAAAGQKVP…IRRMNQLLVS (72 aa).

It belongs to the heat shock protein 90 family. As to quaternary structure, homodimer.

It localises to the cytoplasm. In terms of biological role, molecular chaperone. Has ATPase activity. The polypeptide is Chaperone protein HtpG (Shigella dysenteriae serotype 1 (strain Sd197)).